The following is a 359-amino-acid chain: Aminomethyltransferase (359 aa).

It belongs to the GcvT family. As to quaternary structure, the glycine cleavage system is composed of four proteins: P, T, L and H.

It carries out the reaction N(6)-[(R)-S(8)-aminomethyldihydrolipoyl]-L-lysyl-[protein] + (6S)-5,6,7,8-tetrahydrofolate = N(6)-[(R)-dihydrolipoyl]-L-lysyl-[protein] + (6R)-5,10-methylene-5,6,7,8-tetrahydrofolate + NH4(+). Its function is as follows. The glycine cleavage system catalyzes the degradation of glycine. The protein is Aminomethyltransferase of Pseudoalteromonas atlantica (strain T6c / ATCC BAA-1087).